The sequence spans 597 residues: Gamma-terpinene synthase, chloroplastic (597 aa).

A chloroplast-targeting transit peptide spans 1–47; the sequence is MATLSMQVSILSKQVKNLNSFGMRASKLPMVARRVDVSTTRLRPICS. Mn(2+) is bound by residues Asp-350 and Asp-354. The DDXXD motif signature appears at 350-354; sequence DDVYD. Homodimerization stretches follow at residues 356 to 362 and 428 to 465; these read YGTLDEL and EAKWYYAGYTPTLAEYLENAKVSISSPTIISQVYFTLP. Mn(2+)-binding residues include Asp-494 and Glu-502.

It belongs to the terpene synthase family. As to quaternary structure, homodimer. The cofactor is Mn(2+). It depends on Mg(2+) as a cofactor.

It is found in the plastid. It localises to the chloroplast. The enzyme catalyses (2E)-geranyl diphosphate = gamma-terpinene + diphosphate. It functions in the pathway secondary metabolite biosynthesis; terpenoid biosynthesis. Functionally, involved in the biosynthesis of phenolic monoterpenes natural products thymol and carvacrol which have a broad range of biological activities acting as antimicrobial compounds, insecticides, antioxidants and pharmaceutical agents. Monoterpene synthase which catalyzes the conversion of geranyl diphosphate (GPP) to gamma-terpinene and minor amounts of other monoterpenes (e.g. alpha-thujene, alpha-terpinene, myrcene, sabinene, (+)-R-limonene, alpha-pinene and alpha-phellandrene). The sequence is that of Gamma-terpinene synthase, chloroplastic from Thymus caespititius (Cretan thyme).